The following is a 100-amino-acid chain: MYB-like transcription factor TCL2 (100 aa).

In terms of domain architecture, Myb-like spans 37–74; sequence TEQEEDLIFRMHRLVGDRWDLIAGRVVGREAKDIERYW.

As to quaternary structure, interacts with GL3. Expressed in cotyledons, petioles, rosette leaves, hydathodes, cauline leaves, stems, pedicels and flower buds.

The protein resides in the nucleus. Its function is as follows. MYB-type transcription factor involved in trichome cell specification. Acts as a negative regulator of trichome patterning and formation. May function by suppressing the expression of GL3. This Arabidopsis thaliana (Mouse-ear cress) protein is MYB-like transcription factor TCL2 (TCL2).